The sequence spans 283 residues: MACGSSLDSIDMNSIPLVALNYTVRHRLCLYLNPDAVVAADWTRLAEEMGYDYLEIRNFQRYPDSTMKLLEDWEKKCFRATVGGLLEMLKKMERNDILTDLGPLIEADCMKYLEKKHVPLPIQDDKVDSSEQYRITKSDDPYGSMPETFDAFICYCAQDISFVQEMISRLEQTDYKLKLCVFDRDVLPGTCLWSITSELIENRCRKMVVIISDDYLDSSDCDFQTKFALSLGPGAREKRLIPVKYKPMKRPFPSILRFITVCDYTNPYTKAWFWDKLAKALAR.

One can recognise a Death domain in the interval 27 to 105; that stretch reads RLCLYLNPDA…DILTDLGPLI (79 aa). The tract at residues 106-143 is intermediate domain; it reads EADCMKYLEKKHVPLPIQDDKVDSSEQYRITKSDDPYG. Residues 147 to 281 enclose the TIR domain; it reads ETFDAFICYC…WFWDKLAKAL (135 aa).

The protein localises to the cytoplasm. In terms of biological role, adapter protein involved in the Toll-like receptor and IL-1 receptor signaling pathway in the innate immune response. Activates expression of target genes in the Spemann organizer region during early embryonic development. Is required for normal axis formation. This is Myeloid differentiation primary response protein MyD88-A (myd88-a) from Xenopus laevis (African clawed frog).